Here is a 103-residue protein sequence, read N- to C-terminus: MTALRRTISIIFVFYLSCTLFVNIFGVQARNLCKTDEDCVLRCQDPGANCILGICHCSRQQVETELTKVIRCKTDRDCPDSHQCPKDYYYACLNNGECTCISV.

The first 29 residues, 1 to 29 (MTALRRTISIIFVFYLSCTLFVNIFGVQA), serve as a signal peptide directing secretion. Intrachain disulfides connect cysteine 33-cysteine 50, cysteine 39-cysteine 55, cysteine 43-cysteine 57, cysteine 72-cysteine 92, cysteine 78-cysteine 98, and cysteine 84-cysteine 100.

This sequence belongs to the DEFL family.

It localises to the secreted. This chain is Defensin-like protein 290, found in Arabidopsis thaliana (Mouse-ear cress).